We begin with the raw amino-acid sequence, 216 residues long: MOB kinase activator 3C (216 aa).

Cys82, Cys87, His164, and His169 together coordinate Zn(2+).

It belongs to the MOB1/phocein family.

In terms of biological role, may regulate the activity of kinases. This chain is MOB kinase activator 3C (MOB3C), found in Bos taurus (Bovine).